The primary structure comprises 1149 residues: MFQTKLRNESWEDLQKMSCTTEIQVAFILSSFMTFISGLIILLIFRLIWRTVKKWQIIKGTGIILELFTSGSIRRNHVRSLHFHGRFRDRIEMLLSAQTFVGQVLVILVFVLSIGSLIIYFINSADPVGSCSSYEDKTIPVDLVFNAFFSFYFGLRFMAADDKIKFWLEMNSIVDIFTIPPTFISYYLKSNWLGLRFLRALRLLELPRILQILRAIKTSNSVKFSKLLSIVLSTWFTAAGFIHLVENSGDPWLKGRNSQNISYFDSVYLVMATTSTVGFGDVVAKTSLGRTFIIFFTLGSLILFANYIPEMVELFANKRKYTSSYEALKGKKFIVVCGNITVDSVTAFLRNFLRRKSGEINTEIVFLGESPPSLELETIFKCYLAYTTFISGSAMKWEDLRRVAVESAEACLIIANPLCSDSHAEDISNIMRVLSIKNYDSTTRIIIQILQSHNKVYLPKIPSWDWDAGDNIICFAELKLGFIAQGCLVPGLCTFLTSLFVEQNRKVTPKQTWQKHFLNSMKNNILTQRLSDDFAGMSFPEVARLCFLKMHLLLIAIEYKSLFTDGFCGLILNPPAQIRIHKNTLGFFIAETPKEVKRALFYCSVCHDDVFIPELITNCGCKSRSRQHVTVPAVKIVKKCMKGLSSHMAGQDSPPRVHASPSRISDFTTRTFPHDVEQDSDQLDSSGMFHWCKPISLDKVTLKRSRKLKHKFRNHIVACVFGDAQSALIGLRNFVMPLRASNYTRKELKDIVFIGSLDYLQREWRFLRNFPQIYILPGCALYSGDLHAANIEQCSMCVVLSPPSKPSSSQTLVDAEAILATLTIGSLQIDSSSDSSPSVSEETASCTNGHNEKSNCRKVPILIELKNPSNIHFIEQLGGLEGSLQETNLHLSTAFSTGTVFSGSFLDSLLATSFYNYHVLELLQMLVTGGVSSQLEQHLDKDKVYGVADSCTTLLSGRNRCKMGLLSLHQTILSDVNPRNTFGQLFCGSLDLFGILCVGLYRIIDEEELNPENKRFVITRPANEFKLLPSDLVFCAIPFSTACYKRNEEFSSQKSYEIIKEASQTTETHSDTNFPPTIYSVDETSYSPVYSYPSRTNSVYSANQTARNQIRTNSSITSQKPLGDNAKKNGKKISDEISDEDPFAYSEPL.

The Extracellular segment spans residues 1–24; sequence MFQTKLRNESWEDLQKMSCTTEIQ. Residues 25–45 traverse the membrane as a helical segment; that stretch reads VAFILSSFMTFISGLIILLIF. Residues 46–101 are Cytoplasmic-facing; the sequence is RLIWRTVKKWQIIKGTGIILELFTSGSIRRNHVRSLHFHGRFRDRIEMLLSAQTFV. Residues 102 to 122 form a helical membrane-spanning segment; the sequence is GQVLVILVFVLSIGSLIIYFI. Residues 123 to 138 lie on the Extracellular side of the membrane; that stretch reads NSADPVGSCSSYEDKT. The helical transmembrane segment at 139–159 threads the bilayer; that stretch reads IPVDLVFNAFFSFYFGLRFMA. At 160–163 the chain is on the cytoplasmic side; that stretch reads ADDK. Residues 164–184 traverse the membrane as a helical segment; sequence IKFWLEMNSIVDIFTIPPTFI. Over 185 to 188 the chain is Extracellular; it reads SYYL. A helical; Voltage-sensor membrane pass occupies residues 189–209; sequence KSNWLGLRFLRALRLLELPRI. At 210-226 the chain is on the cytoplasmic side; sequence LQILRAIKTSNSVKFSK. Residues 227–247 form a helical membrane-spanning segment; that stretch reads LLSIVLSTWFTAAGFIHLVEN. Residues 248 to 259 are Extracellular-facing; that stretch reads SGDPWLKGRNSQ. The pore-forming intramembrane region spans 260 to 282; it reads NISYFDSVYLVMATTSTVGFGDV. The Selectivity for potassium motif lies at 276–279; it reads TVGF. The Extracellular segment spans residues 283–291; sequence VAKTSLGRT. A helical transmembrane segment spans residues 292–312; sequence FIIFFTLGSLILFANYIPEMV. Residues 313–1149 lie on the Cytoplasmic side of the membrane; it reads ELFANKRKYT…EDPFAYSEPL (837 aa). 2 RCK N-terminal domains span residues 331 to 473 and 713 to 884; these read KKFI…DNII and RNHI…EGSL. Residues 829–845 show a composition bias toward low complexity; the sequence is IDSSSDSSPSVSEETAS. Disordered regions lie at residues 829 to 851 and 1106 to 1149; these read IDSS…NGHN and ARNQ…SEPL. Over residues 1106-1120 the composition is skewed to polar residues; sequence ARNQIRTNSSITSQK.

Belongs to the potassium channel family. Calcium-activated (TC 1.A.1.3) subfamily. KCa5.1/KCNU1 sub-subfamily. In terms of assembly, homotetramer; which constitutes the calcium-activated potassium channel. Interacts with LRRC52; this interaction changes some channel gating properties, such as shifting gating to more negative potentials at a given pH. As to expression, testis-specific.

Its subcellular location is the cell membrane. It localises to the cell projection. The protein resides in the cilium. It is found in the flagellum membrane. The catalysed reaction is K(+)(in) = K(+)(out). With respect to regulation, regulated by changes in cytosolic pH; activated by alkalization. VU0546110 acts as a selective inhibitor. The auxiliary subunit LRRC52 shifts the activation of KCNU1 to more negative potentials at a given pH. Testis-specific potassium channel activated by both intracellular pH and membrane voltage that mediates export of K(+). Represents the primary spermatozoan K(+) current. The channel underlies a pH-triggered membrane hyperpolarization during the process of sperm capacitation, as sperm encounter the alkaline environment near the ovum in the female reproductive tract, thereby playing an essential for male fertility. The polypeptide is Potassium channel subfamily U member 1 (KCNU1) (Macaca fascicularis (Crab-eating macaque)).